Reading from the N-terminus, the 489-residue chain is Glutamate--tRNA ligase (489 aa).

The 'HIGH' region signature appears at 12-22 (PSPTGIPHVGM). Residues 256 to 260 (KLSKR) carry the 'KMSKS' region motif. An ATP-binding site is contributed by Lys259.

This sequence belongs to the class-I aminoacyl-tRNA synthetase family. Glutamate--tRNA ligase type 1 subfamily. Monomer.

It localises to the cytoplasm. The catalysed reaction is tRNA(Glu) + L-glutamate + ATP = L-glutamyl-tRNA(Glu) + AMP + diphosphate. Functionally, catalyzes the attachment of glutamate to tRNA(Glu) in a two-step reaction: glutamate is first activated by ATP to form Glu-AMP and then transferred to the acceptor end of tRNA(Glu). The sequence is that of Glutamate--tRNA ligase from Mycobacterium marinum (strain ATCC BAA-535 / M).